Here is a 326-residue protein sequence, read N- to C-terminus: DNA-directed RNA polymerase subunit alpha (326 aa).

The alpha N-terminal domain (alpha-NTD) stretch occupies residues 1 to 231 (MQTALLKPKI…DQLSVFAALE (231 aa)). Positions 247 to 326 (IDPILLRPVD…ENWPPAGLDK (80 aa)) are alpha C-terminal domain (alpha-CTD).

It belongs to the RNA polymerase alpha chain family. As to quaternary structure, homodimer. The RNAP catalytic core consists of 2 alpha, 1 beta, 1 beta' and 1 omega subunit. When a sigma factor is associated with the core the holoenzyme is formed, which can initiate transcription.

The enzyme catalyses RNA(n) + a ribonucleoside 5'-triphosphate = RNA(n+1) + diphosphate. Its function is as follows. DNA-dependent RNA polymerase catalyzes the transcription of DNA into RNA using the four ribonucleoside triphosphates as substrates. In Cupriavidus pinatubonensis (strain JMP 134 / LMG 1197) (Cupriavidus necator (strain JMP 134)), this protein is DNA-directed RNA polymerase subunit alpha.